Here is a 752-residue protein sequence, read N- to C-terminus: Photosystem I P700 chlorophyll a apoprotein A1 (752 aa).

8 consecutive transmembrane segments (helical) span residues 73 to 96 (IFSA…FHGA), 159 to 182 (LYVT…FHYH), 198 to 222 (MNHH…HVSL), 294 to 312 (RAHH…GHMY), 349 to 372 (WHAQ…HHMY), 388 to 414 (LCLF…IFMV), 436 to 458 (AIIS…LYIH), and 533 to 551 (FLVH…LILL). [4Fe-4S] cluster contacts are provided by C575 and C584. Helical transmembrane passes span 591-612 (HVFL…HFSW) and 666-688 (LSAY…MFLF). H677 serves as a coordination point for chlorophyll a'. The chlorophyll a site is built by M685 and Y693. W694 is a phylloquinone binding site. Residues 726-746 (AVGVAHYLLGGIATTWSFFHA) traverse the membrane as a helical segment.

It belongs to the PsaA/PsaB family. The PsaA/B heterodimer binds the P700 chlorophyll special pair and subsequent electron acceptors. PSI consists of a core antenna complex that captures photons, and an electron transfer chain that converts photonic excitation into a charge separation. The eukaryotic PSI reaction center is composed of at least 11 subunits. The cofactor is P700 is a chlorophyll a/chlorophyll a' dimer, A0 is one or more chlorophyll a, A1 is one or both phylloquinones and FX is a shared 4Fe-4S iron-sulfur center..

Its subcellular location is the plastid. The protein resides in the cyanelle thylakoid membrane. The catalysed reaction is reduced [plastocyanin] + hnu + oxidized [2Fe-2S]-[ferredoxin] = oxidized [plastocyanin] + reduced [2Fe-2S]-[ferredoxin]. Its function is as follows. PsaA and PsaB bind P700, the primary electron donor of photosystem I (PSI), as well as the electron acceptors A0, A1 and FX. PSI is a cytochrome c6-ferredoxin oxidoreductase, converting photonic excitation into a charge separation, which transfers an electron from the donor P700 chlorophyll pair to the spectroscopically characterized acceptors A0, A1, FX, FA and FB in turn. Oxidized P700 is reduced on the lumenal side of the thylakoid membrane by cytochrome c6. This Cyanophora paradoxa protein is Photosystem I P700 chlorophyll a apoprotein A1.